Consider the following 393-residue polypeptide: NAD(P)H-quinone oxidoreductase subunit H, chloroplastic (393 aa).

This sequence belongs to the complex I 49 kDa subunit family. As to quaternary structure, NDH is composed of at least 16 different subunits, 5 of which are encoded in the nucleus.

It is found in the plastid. The protein resides in the chloroplast thylakoid membrane. It catalyses the reaction a plastoquinone + NADH + (n+1) H(+)(in) = a plastoquinol + NAD(+) + n H(+)(out). The enzyme catalyses a plastoquinone + NADPH + (n+1) H(+)(in) = a plastoquinol + NADP(+) + n H(+)(out). Its function is as follows. NDH shuttles electrons from NAD(P)H:plastoquinone, via FMN and iron-sulfur (Fe-S) centers, to quinones in the photosynthetic chain and possibly in a chloroplast respiratory chain. The immediate electron acceptor for the enzyme in this species is believed to be plastoquinone. Couples the redox reaction to proton translocation, and thus conserves the redox energy in a proton gradient. This is NAD(P)H-quinone oxidoreductase subunit H, chloroplastic from Nandina domestica (Heavenly bamboo).